Here is a 530-residue protein sequence, read N- to C-terminus: uncharacterized protein (530 aa).

The segment at 1–33 is disordered; sequence MNNMSLKFPDIAINSSESSDDEDPSSKNEKKDG. The segment covering 24–33 has biased composition (basic and acidic residues); it reads PSSKNEKKDG. Transmembrane regions (helical) follow at residues 83–103, 124–144, 147–167, 181–201, 211–231, 244–264, 323–343, 346–366, 375–395, 404–424, 436–456, and 471–491; these read FFIL…KTAV, WLST…GYLL, FPIS…VLLM, FFSG…TAMW, VVSW…LGYG, YPFL…LFFP, VTNA…YSGI, TLLT…SGIF, IPLA…IWKI, VVGV…LSLL, TVNA…PQLF, and SLVS…YYIF.

It belongs to the major facilitator superfamily. Allantoate permease family.

The protein resides in the endoplasmic reticulum. The protein localises to the membrane. This is an uncharacterized protein from Schizosaccharomyces pombe (strain 972 / ATCC 24843) (Fission yeast).